The chain runs to 454 residues: Tyrosine aminotransferase (454 aa).

An N-acetylmethionine modification is found at Met1. Position 280 is an N6-(pyridoxal phosphate)lysine (Lys280). Residue Ser448 is modified to Phosphoserine.

Belongs to the class-I pyridoxal-phosphate-dependent aminotransferase family. As to quaternary structure, homodimer. The cofactor is pyridoxal 5'-phosphate.

The catalysed reaction is L-tyrosine + 2-oxoglutarate = 3-(4-hydroxyphenyl)pyruvate + L-glutamate. The protein operates within amino-acid degradation; L-phenylalanine degradation; acetoacetate and fumarate from L-phenylalanine: step 2/6. Its function is as follows. Transaminase involved in tyrosine breakdown. Converts tyrosine to p-hydroxyphenylpyruvate. Can catalyze the reverse reaction, using glutamic acid, with 2-oxoglutarate as cosubstrate (in vitro). Has much lower affinity and transaminase activity for phenylalanine. In Mus musculus (Mouse), this protein is Tyrosine aminotransferase (Tat).